The sequence spans 412 residues: Tyrosine--tRNA ligase (412 aa).

Tyrosine 31 serves as a coordination point for L-tyrosine. Residues 36 to 45 carry the 'HIGH' region motif; the sequence is PTAASLHIGH. L-tyrosine-binding residues include tyrosine 162 and glutamine 166. A 'KMSKS' region motif is present at residues 222–226; the sequence is KIGKT. Residue lysine 225 coordinates ATP. An S4 RNA-binding domain is found at 345-412; sequence KRWIDLFVGV…KKKKLVLHLI (68 aa).

This sequence belongs to the class-I aminoacyl-tRNA synthetase family. TyrS type 1 subfamily. Homodimer.

It is found in the cytoplasm. The catalysed reaction is tRNA(Tyr) + L-tyrosine + ATP = L-tyrosyl-tRNA(Tyr) + AMP + diphosphate + H(+). Catalyzes the attachment of tyrosine to tRNA(Tyr) in a two-step reaction: tyrosine is first activated by ATP to form Tyr-AMP and then transferred to the acceptor end of tRNA(Tyr). The polypeptide is Tyrosine--tRNA ligase (Chlamydia caviae (strain ATCC VR-813 / DSM 19441 / 03DC25 / GPIC) (Chlamydophila caviae)).